A 182-amino-acid chain; its full sequence is MKKKLLFLGPPGAGKGTQANLFCKKYGLIHLSTGDLLRDEVSSGSVLGIKAAEIMNKGELVSDELVLSIVEGRLLNINEGWLLDGFPRNVNQANSLKDLLEKINQPLEGVILIKVADDYLIKRLVERGRQDDNEQVITNRLKIYREKTSPLIDLYKKQGILEEIEGNADIDVVFSCIEKSLG.

12 to 17 (GAGKGT) lines the ATP pocket. Residues 32-61 (STGDLLRDEVSSGSVLGIKAAEIMNKGELV) form an NMP region. Residues T33, R38, 59–61 (ELV), 85–88 (GFPR), and Q92 each bind AMP. Residues 126–132 (ERGRQDD) are LID. R127 is a binding site for ATP. AMP is bound by residues R129 and R140. An ATP-binding site is contributed by A168.

It belongs to the adenylate kinase family. In terms of assembly, monomer.

Its subcellular location is the cytoplasm. It catalyses the reaction AMP + ATP = 2 ADP. Its pathway is purine metabolism; AMP biosynthesis via salvage pathway; AMP from ADP: step 1/1. Its function is as follows. Catalyzes the reversible transfer of the terminal phosphate group between ATP and AMP. Plays an important role in cellular energy homeostasis and in adenine nucleotide metabolism. The chain is Adenylate kinase from Prochlorococcus marinus (strain NATL1A).